We begin with the raw amino-acid sequence, 369 residues long: 3-dehydroquinate synthase (369 aa).

NAD(+)-binding positions include 71 to 76 (DGECHK), 105 to 109 (GVIND), 129 to 130 (TT), Lys-142, Lys-151, and 169 to 172 (TLST). Residues Glu-184, His-247, and His-264 each coordinate Zn(2+).

This sequence belongs to the sugar phosphate cyclases superfamily. Dehydroquinate synthase family. Co(2+) is required as a cofactor. The cofactor is Zn(2+). NAD(+) serves as cofactor.

The protein resides in the cytoplasm. It carries out the reaction 7-phospho-2-dehydro-3-deoxy-D-arabino-heptonate = 3-dehydroquinate + phosphate. Its pathway is metabolic intermediate biosynthesis; chorismate biosynthesis; chorismate from D-erythrose 4-phosphate and phosphoenolpyruvate: step 2/7. Its function is as follows. Catalyzes the conversion of 3-deoxy-D-arabino-heptulosonate 7-phosphate (DAHP) to dehydroquinate (DHQ). In Dichelobacter nodosus (strain VCS1703A), this protein is 3-dehydroquinate synthase.